The primary structure comprises 268 residues: Ribosomal RNA small subunit methyltransferase A (268 aa).

Asn-19, Leu-21, Gly-46, Glu-67, Asp-92, and Asn-113 together coordinate S-adenosyl-L-methionine.

This sequence belongs to the class I-like SAM-binding methyltransferase superfamily. rRNA adenine N(6)-methyltransferase family. RsmA subfamily.

It is found in the cytoplasm. The catalysed reaction is adenosine(1518)/adenosine(1519) in 16S rRNA + 4 S-adenosyl-L-methionine = N(6)-dimethyladenosine(1518)/N(6)-dimethyladenosine(1519) in 16S rRNA + 4 S-adenosyl-L-homocysteine + 4 H(+). Functionally, specifically dimethylates two adjacent adenosines (A1518 and A1519) in the loop of a conserved hairpin near the 3'-end of 16S rRNA in the 30S particle. May play a critical role in biogenesis of 30S subunits. The sequence is that of Ribosomal RNA small subunit methyltransferase A from Tolumonas auensis (strain DSM 9187 / NBRC 110442 / TA 4).